The following is a 473-amino-acid chain: ATP synthase subunit beta (473 aa).

153-160 (GGAGVGKT) is an ATP binding site.

The protein belongs to the ATPase alpha/beta chains family. In terms of assembly, F-type ATPases have 2 components, CF(1) - the catalytic core - and CF(0) - the membrane proton channel. CF(1) has five subunits: alpha(3), beta(3), gamma(1), delta(1), epsilon(1). CF(0) has three main subunits: a(1), b(2) and c(9-12). The alpha and beta chains form an alternating ring which encloses part of the gamma chain. CF(1) is attached to CF(0) by a central stalk formed by the gamma and epsilon chains, while a peripheral stalk is formed by the delta and b chains.

The protein localises to the cell inner membrane. The catalysed reaction is ATP + H2O + 4 H(+)(in) = ADP + phosphate + 5 H(+)(out). Produces ATP from ADP in the presence of a proton gradient across the membrane. The catalytic sites are hosted primarily by the beta subunits. This Rickettsia akari (strain Hartford) protein is ATP synthase subunit beta.